The sequence spans 121 residues: Cell division protein FtsB (121 aa).

Residues 1 to 6 (MRNWRW) lie on the Cytoplasmic side of the membrane. Residues 7 to 24 (LLLVLAVLLAWLQYRFWF) form a helical membrane-spanning segment. At 25–121 (GPGNSGEVMM…PEPVDPVDHP (97 aa)) the chain is on the periplasmic side. A coiled-coil region spans residues 31 to 66 (EVMMLEAQVAHQTQDNEGLRQRNQALAAEVKDLKDG). Positions 98–121 (APASAEASAPAQQAPEPVDPVDHP) are disordered. A compositionally biased stretch (low complexity) spans 99–113 (PASAEASAPAQQAPE).

The protein belongs to the FtsB family. Part of a complex composed of FtsB, FtsL and FtsQ.

The protein resides in the cell inner membrane. Functionally, essential cell division protein. May link together the upstream cell division proteins, which are predominantly cytoplasmic, with the downstream cell division proteins, which are predominantly periplasmic. This Xanthomonas axonopodis pv. citri (strain 306) protein is Cell division protein FtsB.